The chain runs to 488 residues: Cobyric acid synthase (488 aa).

The 194-residue stretch at 248 to 441 (VLRVVVPALP…VHGLFDTPAA (194 aa)) folds into the GATase cobBQ-type domain. Residue Cys-328 is the Nucleophile of the active site. His-433 is a catalytic residue.

It belongs to the CobB/CobQ family. CobQ subfamily.

Its pathway is cofactor biosynthesis; adenosylcobalamin biosynthesis. In terms of biological role, catalyzes amidations at positions B, D, E, and G on adenosylcobyrinic A,C-diamide. NH(2) groups are provided by glutamine, and one molecule of ATP is hydrogenolyzed for each amidation. This chain is Cobyric acid synthase, found in Burkholderia vietnamiensis (strain G4 / LMG 22486) (Burkholderia cepacia (strain R1808)).